We begin with the raw amino-acid sequence, 464 residues long: Cysteine--tRNA ligase (464 aa).

Cysteine 27 lines the Zn(2+) pocket. Positions 29 to 39 (PTVYNYFHIGN) match the 'HIGH' region motif. Positions 207, 232, and 236 each coordinate Zn(2+). The 'KMSKS' region motif lies at 264-268 (KMSKS). Lysine 267 is an ATP binding site.

This sequence belongs to the class-I aminoacyl-tRNA synthetase family. Monomer. The cofactor is Zn(2+).

It is found in the cytoplasm. The catalysed reaction is tRNA(Cys) + L-cysteine + ATP = L-cysteinyl-tRNA(Cys) + AMP + diphosphate. This Alkaliphilus oremlandii (strain OhILAs) (Clostridium oremlandii (strain OhILAs)) protein is Cysteine--tRNA ligase.